The chain runs to 420 residues: Glucose-1-phosphate adenylyltransferase (420 aa).

Alpha-D-glucose 1-phosphate contacts are provided by residues Tyr-107, Gly-172, 187-188 (EK), and Ser-205.

It belongs to the bacterial/plant glucose-1-phosphate adenylyltransferase family. In terms of assembly, homotetramer.

The catalysed reaction is alpha-D-glucose 1-phosphate + ATP + H(+) = ADP-alpha-D-glucose + diphosphate. Its pathway is glycan biosynthesis; glycogen biosynthesis. Involved in the biosynthesis of ADP-glucose, a building block required for the elongation reactions to produce glycogen. Catalyzes the reaction between ATP and alpha-D-glucose 1-phosphate (G1P) to produce pyrophosphate and ADP-Glc. This is Glucose-1-phosphate adenylyltransferase from Rhodopseudomonas palustris (strain ATCC BAA-98 / CGA009).